Consider the following 271-residue polypeptide: Putative pyruvate, phosphate dikinase regulatory protein (271 aa).

G151–T158 provides a ligand contact to ADP.

This sequence belongs to the pyruvate, phosphate/water dikinase regulatory protein family. PDRP subfamily.

The enzyme catalyses N(tele)-phospho-L-histidyl/L-threonyl-[pyruvate, phosphate dikinase] + ADP = N(tele)-phospho-L-histidyl/O-phospho-L-threonyl-[pyruvate, phosphate dikinase] + AMP + H(+). It catalyses the reaction N(tele)-phospho-L-histidyl/O-phospho-L-threonyl-[pyruvate, phosphate dikinase] + phosphate + H(+) = N(tele)-phospho-L-histidyl/L-threonyl-[pyruvate, phosphate dikinase] + diphosphate. Functionally, bifunctional serine/threonine kinase and phosphorylase involved in the regulation of the pyruvate, phosphate dikinase (PPDK) by catalyzing its phosphorylation/dephosphorylation. In Streptococcus uberis (strain ATCC BAA-854 / 0140J), this protein is Putative pyruvate, phosphate dikinase regulatory protein.